We begin with the raw amino-acid sequence, 163 residues long: Nucleotide-binding protein all4662 (163 aa).

This sequence belongs to the YajQ family.

In terms of biological role, nucleotide-binding protein. The polypeptide is Nucleotide-binding protein all4662 (Nostoc sp. (strain PCC 7120 / SAG 25.82 / UTEX 2576)).